The primary structure comprises 430 residues: tRNA(Ile)-lysidine synthase (430 aa).

Residue 27-32 coordinates ATP; that stretch reads SGGSDS.

This sequence belongs to the tRNA(Ile)-lysidine synthase family.

Its subcellular location is the cytoplasm. It catalyses the reaction cytidine(34) in tRNA(Ile2) + L-lysine + ATP = lysidine(34) in tRNA(Ile2) + AMP + diphosphate + H(+). Ligates lysine onto the cytidine present at position 34 of the AUA codon-specific tRNA(Ile) that contains the anticodon CAU, in an ATP-dependent manner. Cytidine is converted to lysidine, thus changing the amino acid specificity of the tRNA from methionine to isoleucine. The polypeptide is tRNA(Ile)-lysidine synthase (Rickettsia typhi (strain ATCC VR-144 / Wilmington)).